Reading from the N-terminus, the 102-residue chain is Small ribosomal subunit protein uS10 (102 aa).

This sequence belongs to the universal ribosomal protein uS10 family. As to quaternary structure, part of the 30S ribosomal subunit.

In terms of biological role, involved in the binding of tRNA to the ribosomes. The polypeptide is Small ribosomal subunit protein uS10 (Kineococcus radiotolerans (strain ATCC BAA-149 / DSM 14245 / SRS30216)).